Here is a 493-residue protein sequence, read N- to C-terminus: Chaperone SurA (493 aa).

The first 33 residues, 1–33 (MKRQAFSLLSRLNPWQQLLLSAVLVTLAAPAAA), serve as a signal peptide directing secretion. A disordered region spans residues 46-76 (FTQQGSQSASQGSTVAPSQPMMGVPQPSSQP). Positions 48–58 (QQGSQSASQGS) are enriched in low complexity. PpiC domains are found at residues 230–332 (PTEF…KLVS) and 346–444 (IAQT…QVEN).

It is found in the periplasm. It catalyses the reaction [protein]-peptidylproline (omega=180) = [protein]-peptidylproline (omega=0). In terms of biological role, chaperone involved in the correct folding and assembly of outer membrane proteins. Recognizes specific patterns of aromatic residues and the orientation of their side chains, which are found more frequently in integral outer membrane proteins. May act in both early periplasmic and late outer membrane-associated steps of protein maturation. The protein is Chaperone SurA of Cupriavidus metallidurans (strain ATCC 43123 / DSM 2839 / NBRC 102507 / CH34) (Ralstonia metallidurans).